A 301-amino-acid chain; its full sequence is tRNA uridine(34) hydroxylase (301 aa).

The 92-residue stretch at 121 to 212 (NDKDTLVLDS…YLKNIKKKES (92 aa)) folds into the Rhodanese domain. C172 functions as the Cysteine persulfide intermediate in the catalytic mechanism.

Belongs to the TrhO family.

The catalysed reaction is uridine(34) in tRNA + AH2 + O2 = 5-hydroxyuridine(34) in tRNA + A + H2O. In terms of biological role, catalyzes oxygen-dependent 5-hydroxyuridine (ho5U) modification at position 34 in tRNAs. The polypeptide is tRNA uridine(34) hydroxylase (Pelagibacter ubique (strain HTCC1062)).